A 283-amino-acid polypeptide reads, in one-letter code: tRNA-cytidine(32) 2-sulfurtransferase (283 aa).

Positions 37–42 (SGGKDS) match the PP-loop motif motif. Residues C112, C115, and C203 each coordinate [4Fe-4S] cluster.

It belongs to the TtcA family. Homodimer. Mg(2+) is required as a cofactor. [4Fe-4S] cluster serves as cofactor.

The protein localises to the cytoplasm. The catalysed reaction is cytidine(32) in tRNA + S-sulfanyl-L-cysteinyl-[cysteine desulfurase] + AH2 + ATP = 2-thiocytidine(32) in tRNA + L-cysteinyl-[cysteine desulfurase] + A + AMP + diphosphate + H(+). It functions in the pathway tRNA modification. Catalyzes the ATP-dependent 2-thiolation of cytidine in position 32 of tRNA, to form 2-thiocytidine (s(2)C32). The sulfur atoms are provided by the cysteine/cysteine desulfurase (IscS) system. In Legionella pneumophila (strain Corby), this protein is tRNA-cytidine(32) 2-sulfurtransferase.